The following is a 171-amino-acid chain: Peptide deformylase (171 aa).

Fe cation is bound by residues cysteine 91 and histidine 133. Glutamate 134 is an active-site residue. Fe cation is bound at residue histidine 137.

It belongs to the polypeptide deformylase family. Requires Fe(2+) as cofactor.

The catalysed reaction is N-terminal N-formyl-L-methionyl-[peptide] + H2O = N-terminal L-methionyl-[peptide] + formate. Removes the formyl group from the N-terminal Met of newly synthesized proteins. Requires at least a dipeptide for an efficient rate of reaction. N-terminal L-methionine is a prerequisite for activity but the enzyme has broad specificity at other positions. The protein is Peptide deformylase of Haemophilus ducreyi (strain 35000HP / ATCC 700724).